A 181-amino-acid polypeptide reads, in one-letter code: Ribulose bisphosphate carboxylase small subunit, chloroplastic 6 (181 aa).

The transit peptide at 1-57 directs the protein to the chloroplast; sequence MASSIVSSAAVATRSNVAQASMVAPFTGLKSAASFPVTKKNNNVDITSLASNGGRVR.

The protein belongs to the RuBisCO small chain family. As to quaternary structure, heterohexadecamer of 8 large and 8 small subunits.

Its subcellular location is the plastid. It localises to the chloroplast. RuBisCO catalyzes two reactions: the carboxylation of D-ribulose 1,5-bisphosphate, the primary event in carbon dioxide fixation, as well as the oxidative fragmentation of the pentose substrate. Both reactions occur simultaneously and in competition at the same active site. Although the small subunit is not catalytic it is essential for maximal activity. The chain is Ribulose bisphosphate carboxylase small subunit, chloroplastic 6 from Solanum tuberosum (Potato).